Consider the following 245-residue polypeptide: 1-(5-phosphoribosyl)-5-[(5-phosphoribosylamino)methylideneamino] imidazole-4-carboxamide isomerase (245 aa).

The active-site Proton acceptor is Asp-7. Asp-129 acts as the Proton donor in catalysis.

Belongs to the HisA/HisF family.

Its subcellular location is the cytoplasm. The catalysed reaction is 1-(5-phospho-beta-D-ribosyl)-5-[(5-phospho-beta-D-ribosylamino)methylideneamino]imidazole-4-carboxamide = 5-[(5-phospho-1-deoxy-D-ribulos-1-ylimino)methylamino]-1-(5-phospho-beta-D-ribosyl)imidazole-4-carboxamide. The protein operates within amino-acid biosynthesis; L-histidine biosynthesis; L-histidine from 5-phospho-alpha-D-ribose 1-diphosphate: step 4/9. The chain is 1-(5-phosphoribosyl)-5-[(5-phosphoribosylamino)methylideneamino] imidazole-4-carboxamide isomerase from Vibrio campbellii (strain ATCC BAA-1116).